Consider the following 380-residue polypeptide: Glucose-1-phosphate adenylyltransferase (380 aa).

Residues G164, 179–180 (EK), and S190 contribute to the alpha-D-glucose 1-phosphate site.

This sequence belongs to the bacterial/plant glucose-1-phosphate adenylyltransferase family. Homotetramer.

The enzyme catalyses alpha-D-glucose 1-phosphate + ATP + H(+) = ADP-alpha-D-glucose + diphosphate. It participates in glycan biosynthesis; glycogen biosynthesis. In terms of biological role, involved in the biosynthesis of ADP-glucose, a building block required for the elongation reactions to produce glycogen. Catalyzes the reaction between ATP and alpha-D-glucose 1-phosphate (G1P) to produce pyrophosphate and ADP-Glc. This is Glucose-1-phosphate adenylyltransferase from Streptococcus pneumoniae (strain Hungary19A-6).